A 734-amino-acid chain; its full sequence is Tripartite terminase subunit 3 (734 aa).

The short motif at 183-189 (PKKRAKV) is the Nuclear localization signal element. The short motif at 258–265 (VPRRHGKT) is the Walker A motif element. Positions 352-357 (LLFVDE) match the Walker B motif motif. Residue Glu-357 is the For ATPase activity of the active site. Active-site for nuclease activity residues include Asp-509, Glu-581, and Asp-706.

This sequence belongs to the herpesviridae TRM3 protein family. Interacts with the terminase subunits TRM1 and TRM2. Interacts with portal protein.

The protein resides in the host nucleus. In terms of biological role, component of the molecular motor that translocates viral genomic DNA in empty capsid during DNA packaging. Forms a tripartite terminase complex together with TRM1 and TRM2 in the host cytoplasm. Once the complex reaches the host nucleus, it interacts with the capsid portal vertex. This portal forms a ring in which genomic DNA is translocated into the capsid. TRM3 carries an RNase H-like nuclease activity that plays an important role for the cleavage of concatemeric viral DNA into unit length genomes. The chain is Tripartite terminase subunit 3 from Human herpesvirus 2 (strain HG52) (HHV-2).